We begin with the raw amino-acid sequence, 462 residues long: Hydroxymethylglutaryl-CoA synthase (462 aa).

Glu86 (proton donor/acceptor) is an active-site residue. Catalysis depends on Cys120, which acts as the Acyl-thioester intermediate. (3S)-3-hydroxy-3-methylglutaryl-CoA-binding residues include Cys120, Thr211, His261, Lys270, Asn338, and Ser372. His261 functions as the Proton donor/acceptor in the catalytic mechanism.

This sequence belongs to the thiolase-like superfamily. HMG-CoA synthase family.

The catalysed reaction is acetoacetyl-CoA + acetyl-CoA + H2O = (3S)-3-hydroxy-3-methylglutaryl-CoA + CoA + H(+). The protein operates within siderophore biosynthesis. Functionally, hydroxymethylglutaryl-CoA synthase involved in the biosynthesis of siderophore ferrichrome A which is contributing to organismal virulence. The first step of ferrichrome A biosynthesis is performed by the HMG-CoA synthase hcs1 which catalyzes the generation of HMG-CoA and CoA using acetoacetyl-CoA and acetyl-CoA as substrates. The enoyl-CoA isomerase/hydratase fer4 then catalyzes the conversion of hcs1-produced HMG-CoA to methylglutaconyl-CoA. The acyltransferase fer5 then fuses the fer4-generated methylglutaconyl-CoA with sid1-generated hydroxyornithine to yield methylglutaconyl hydroxyornithine. Methylglutaconyl hydroxyornithine is then available for use by the NRPS fer3 to generate ferrichrome A. In Mycosarcoma maydis (Corn smut fungus), this protein is Hydroxymethylglutaryl-CoA synthase.